The following is a 186-amino-acid chain: Ribonuclease HII (186 aa).

The RNase H type-2 domain occupies 2–186 (KILAGVDEVG…KTFSPISDLL (185 aa)). A divalent metal cation contacts are provided by Asp8, Glu9, and Asp99.

Belongs to the RNase HII family. Mn(2+) is required as a cofactor. Mg(2+) serves as cofactor.

It is found in the cytoplasm. The enzyme catalyses Endonucleolytic cleavage to 5'-phosphomonoester.. Endonuclease that specifically degrades the RNA of RNA-DNA hybrids. This is Ribonuclease HII from Pelagibacter ubique (strain HTCC1062).